The chain runs to 217 residues: tRNA (guanine-N(7)-)-methyltransferase (217 aa).

S-adenosyl-L-methionine contacts are provided by glutamate 44, glutamate 69, aspartate 96, and aspartate 118. Aspartate 118 is a catalytic residue. Residues lysine 122, aspartate 154, and threonine 191–glutamate 194 each bind substrate.

The protein belongs to the class I-like SAM-binding methyltransferase superfamily. TrmB family.

It catalyses the reaction guanosine(46) in tRNA + S-adenosyl-L-methionine = N(7)-methylguanosine(46) in tRNA + S-adenosyl-L-homocysteine. It participates in tRNA modification; N(7)-methylguanine-tRNA biosynthesis. In terms of biological role, catalyzes the formation of N(7)-methylguanine at position 46 (m7G46) in tRNA. This chain is tRNA (guanine-N(7)-)-methyltransferase, found in Bacillus mycoides (strain KBAB4) (Bacillus weihenstephanensis).